Here is a 295-residue protein sequence, read N- to C-terminus: MHILLQKYYNYLRIERQLSPYTLINYQRQLEKIVVILQQNDIHSWQQVTPSVVRFVLAQSRKEGLHERSLALRLSALRQFLNYLVVQGELKVNSAVGISAPKQSKYLPKNMDMEQVQQLLTNESKEPIDLRDKAMMELMYSSGLRLSELQSLNLNSINIRSREVRVIGKGNKERILPFGRYASQAIQQWLKVRLLFNPKDEALFVSQLGNRISHRSIQKRMETWGIRQGLNGHLNPHKLRHSFATHMLENSSDLRAVQELLGHSNLSTTQIYTHLDFQHLAQVYDKAHPRAKRKK.

The 85-residue stretch at 1-85 (MHILLQKYYN…ALRQFLNYLV (85 aa)) folds into the Core-binding (CB) domain. The Tyr recombinase domain occupies 106–285 (YLPKNMDMEQ…DFQHLAQVYD (180 aa)). Catalysis depends on residues Arg-145, Lys-169, His-237, Arg-240, and His-263. Residue Tyr-272 is the O-(3'-phospho-DNA)-tyrosine intermediate of the active site.

This sequence belongs to the 'phage' integrase family. XerC subfamily. In terms of assembly, forms a cyclic heterotetrameric complex composed of two molecules of XerC and two molecules of XerD.

Its subcellular location is the cytoplasm. In terms of biological role, site-specific tyrosine recombinase, which acts by catalyzing the cutting and rejoining of the recombining DNA molecules. The XerC-XerD complex is essential to convert dimers of the bacterial chromosome into monomers to permit their segregation at cell division. It also contributes to the segregational stability of plasmids. The chain is Tyrosine recombinase XerC from Histophilus somni (strain 2336) (Haemophilus somnus).